Consider the following 246-residue polypeptide: UDP-2,3-diacylglucosamine hydrolase (246 aa).

The Mn(2+) site is built by D8, H10, D41, N79, and H114. 79-80 contacts substrate; the sequence is NR. The substrate site is built by D122, S160, N164, K167, and H195. 2 residues coordinate Mn(2+): H195 and H197.

The protein belongs to the LpxH family. Mn(2+) is required as a cofactor.

The protein localises to the cell inner membrane. The catalysed reaction is UDP-2-N,3-O-bis[(3R)-3-hydroxytetradecanoyl]-alpha-D-glucosamine + H2O = 2-N,3-O-bis[(3R)-3-hydroxytetradecanoyl]-alpha-D-glucosaminyl 1-phosphate + UMP + 2 H(+). Its pathway is glycolipid biosynthesis; lipid IV(A) biosynthesis; lipid IV(A) from (3R)-3-hydroxytetradecanoyl-[acyl-carrier-protein] and UDP-N-acetyl-alpha-D-glucosamine: step 4/6. Hydrolyzes the pyrophosphate bond of UDP-2,3-diacylglucosamine to yield 2,3-diacylglucosamine 1-phosphate (lipid X) and UMP by catalyzing the attack of water at the alpha-P atom. Involved in the biosynthesis of lipid A, a phosphorylated glycolipid that anchors the lipopolysaccharide to the outer membrane of the cell. In Chromohalobacter salexigens (strain ATCC BAA-138 / DSM 3043 / CIP 106854 / NCIMB 13768 / 1H11), this protein is UDP-2,3-diacylglucosamine hydrolase.